A 308-amino-acid chain; its full sequence is Putative mitochondrial transporter UCP3 (308 aa).

Residues Met-1 to Pro-10 lie on the Mitochondrial intermembrane side of the membrane. Residues Pro-11 to Phe-32 form a helical membrane-spanning segment. 3 Solcar repeats span residues Pro-11–Leu-102, Ser-111–Lys-202, and Asp-211–Ala-296. Topologically, residues Pro-33 to Ser-73 are mitochondrial matrix. The helical transmembrane segment at Pro-74–Tyr-96 threads the bilayer. Over Asp-97–Arg-116 the chain is Mitochondrial intermembrane. Residues Ile-117–Pro-133 form a helical membrane-spanning segment. Over Thr-134–Leu-179 the chain is Mitochondrial matrix. The chain crosses the membrane as a helical span at residues Pro-180–Tyr-196. Topologically, residues Asp-197–Leu-213 are mitochondrial intermembrane. Residues Pro-214 to Pro-233 form a helical membrane-spanning segment. The Mitochondrial matrix portion of the chain corresponds to Val-234–Ala-267. The chain crosses the membrane as a helical span at residues Phe-268–Tyr-290. The tract at residues Ser-275–Leu-297 is purine nucleotide binding. Residues Glu-291 to Phe-308 are Mitochondrial intermembrane-facing.

It belongs to the mitochondrial carrier (TC 2.A.29) family. In terms of assembly, interacts with HAX1; the interaction is direct and calcium-dependent.

It is found in the mitochondrion inner membrane. Functionally, putative transmembrane transporter that plays a role in mitochondrial metabolism via an as yet unclear mechanism. Originally, this mitochondrial protein was thought to act as a proton transmembrane transporter from the mitochondrial intermembrane space into the matrix, causing proton leaks through the inner mitochondrial membrane, thereby uncoupling mitochondrial membrane potential generation from ATP synthesis. However, this function is controversial and uncoupling may not be the function, or at least not the main function, but rather a consequence of more conventional metabolite transporter activity. This is Putative mitochondrial transporter UCP3 from Sus scrofa (Pig).